Here is a 460-residue protein sequence, read N- to C-terminus: Rab-3A-interacting protein (460 aa).

Phosphoserine occurs at positions 147, 149, 247, 250, 272, and 280. The stretch at 149 to 244 (SVLEVREKGY…EVAALKTLVL (96 aa)) forms a coiled coil. The interval 246-280 (SSPTSPTQEPLAAGKTPFKRGHTRNKSTSSAMSGS) is disordered. A compositionally biased stretch (polar residues) spans 271–280 (KSTSSAMSGS).

Belongs to the SEC2 family. In terms of assembly, homodimer. Interacts with the N-terminal region of SSX2. Interacts with the GDP-bound forms of RAB8A and RAB8B. The interaction with RAB8A is prevented by phosphorylation of RAB8A at 'Thr-72'. Interacts with the GDP-bound forms of RAB3A and RAB3D. Interacts with DCDC1. Interacts (via the N-terminal region) with TRAPPC14; this interaction mediates RAB3IP association with the TRAPP II complex. Forms a heterotetramer with RAB11A where RAB3IP homodimer binds two RAB11A subunits. Forms a complex with RAB11A and RAB11FIP3, probably a heterohexamer with two of each protein subunit, where Rabin8/RAB3IP and RAB11FIP3 simultaneously bind to RAB11A; the complex promotes preciliary trafficking. Forms a complex containing RAB11A, ASAP1, RAB3IP, RAP11FIP3 and ARF4; the complex promotes preciliary trafficking; the complex binds to RHO in photoreceptor cells and promotes RHO ciliary transport. As to expression, ubiquitously expressed. Expressed at highest level in testis.

The protein localises to the cytoplasm. Its subcellular location is the nucleus. It is found in the cytoskeleton. The protein resides in the cell projection. It localises to the lamellipodium. Its function is as follows. Guanine nucleotide exchange factor (GEF) which may activate RAB8A and RAB8B. Promotes the exchange of GDP to GTP, converting inactive GDP-bound Rab proteins into their active GTP-bound form. Mediates the release of GDP from RAB8A and RAB8B but not from RAB3A or RAB5. Modulates actin organization and promotes polarized transport of RAB8A-specific vesicles to the cell surface. Together with RAB11A, RAB8A, the exocyst complex, PARD3, PRKCI, ANXA2, CDC42 and DNMBP promotes transcytosis of PODXL to the apical membrane initiation sites (AMIS), apical surface formation and lumenogenesis. Together with RAB11A and FIP3/RAB11FIP3, parts of the ciliary targeting complex that promotes preciliary vesicle trafficking to mother centriole and ciliogenesis initiation. Part of the ciliary targeting complex containing Rab11, ASAP1, RAB3IP and RAB11FIP3 and ARF4 that promotes RAB3IP preciliary vesicle trafficking to mother centriole and ciliogenesis initiation. This is Rab-3A-interacting protein (Rab3ip) from Rattus norvegicus (Rat).